Reading from the N-terminus, the 65-residue chain is DNA gyrase inhibitor YacG (65 aa).

Zn(2+) is bound by residues cysteine 9, cysteine 12, cysteine 28, and cysteine 32. The segment at 43 to 65 (EEKRIPSQSENSDSDDWSGQPEQ) is disordered.

It belongs to the DNA gyrase inhibitor YacG family. As to quaternary structure, interacts with GyrB. The cofactor is Zn(2+).

Inhibits all the catalytic activities of DNA gyrase by preventing its interaction with DNA. Acts by binding directly to the C-terminal domain of GyrB, which probably disrupts DNA binding by the gyrase. This is DNA gyrase inhibitor YacG from Photorhabdus laumondii subsp. laumondii (strain DSM 15139 / CIP 105565 / TT01) (Photorhabdus luminescens subsp. laumondii).